A 124-amino-acid chain; its full sequence is uncharacterized protein (124 aa).

Disordered regions lie at residues 1–31 and 59–124; these read MAQH…TMKP and EDAR…YPQP. Polar residues-rich tracts occupy residues 65 to 86 and 98 to 124; these read GMSS…SDAA and TGEQ…YPQP.

This is an uncharacterized protein from Bos taurus (Bovine).